The chain runs to 407 residues: Large ribosomal subunit protein uL3-like (407 aa).

Residues 1–31 show a composition bias toward basic residues; the sequence is MSHRKFSAPRHGHLGFLPHKRSRRHRGKVKS. The segment at 1-37 is disordered; sequence MSHRKFSAPRHGHLGFLPHKRSRRHRGKVKSWPRDDP.

Belongs to the universal ribosomal protein uL3 family. As to quaternary structure, component of the large ribosomal subunit (LSU). Part of a LSU subcomplex, the 5S RNP which is composed of the 5S RNA, RPL5 and RPL11. Interacts with NVL in an ATP-dependent manner. Interacts with RRP1B. Interacts with IPO5, IPO7 and KPNB1; these interactions may be involved in RPL5 nuclear import for the assembly of ribosomal subunits. Interacts with RRP1B. Expression is restricted to striated muscles.

Heart- and skeletal muscle-specific component of the ribosome, which regulates muscle function. Component of the large ribosomal subunit in striated muscle cells: replaces the RPL3 paralog in the ribosome in these cells. The ribosome is a large ribonucleoprotein complex responsible for the synthesis of proteins in the cell. Inhibits myotube growth and muscle function. The protein is Large ribosomal subunit protein uL3-like of Mus musculus (Mouse).